We begin with the raw amino-acid sequence, 173 residues long: C-type lectin mosGCTL-7 (173 aa).

The N-terminal stretch at Met1–Ala24 is a signal peptide. The region spanning Asn51–Glu167 is the C-type lectin domain. Cystine bridges form between Cys59–Cys166 and Cys139–Cys158. 2 N-linked (GlcNAc...) asparagine glycosylation sites follow: Asn119 and Asn144.

Interacts with putative receptor-type tyrosine-protein phosphatase mosPTP-1; the interaction may mediate the recruitment of Japanese encephalitis virus particles in complex with C-type lectin mosGCTL-7 to the cell surface.

Its subcellular location is the secreted. Functionally, carbohydrate-binding protein. (Microbial infection) Facilitates Japanese encephalitis virus infection in mosquitoes. The sequence is that of C-type lectin mosGCTL-7 from Culex quinquefasciatus (Southern house mosquito).